A 397-amino-acid polypeptide reads, in one-letter code: P-selectin glycoprotein ligand 1 (397 aa).

An N-terminal signal peptide occupies residues Met-1 to Ser-17. Positions Leu-18–Arg-41 are excised as a propeptide. Over Leu-18 to Cys-307 the chain is Extracellular. Tyr-54 carries the sulfotyrosine modification. Residue Thr-58 is glycosylated (O-linked (GalNAc...) threonine). An N-linked (GlcNAc...) asparagine glycan is attached at Asn-66. Residues Thr-89–Asn-261 are disordered. Residues Ser-120 to Ala-198 are compositionally biased toward polar residues. A run of 10 repeats spans residues Gln-126–Val-135, Gln-136–Ser-145, Gln-146–Ser-155, Gln-156–Ser-165, Gln-166–Ser-175, Gln-176–Ser-185, Gln-186–Ser-195, Gln-196–Ser-205, Lys-206–Ser-215, and Lys-216–Thr-225. The 10 X 10 AA tandem repeats stretch occupies residues Gln-126–Thr-225. A compositionally biased stretch (polar residues) spans Leu-236–Asn-261. N-linked (GlcNAc...) asparagine glycosylation is present at Asn-261. A helical transmembrane segment spans residues Leu-308–Leu-328. Residues Ala-329–Pro-397 are Cytoplasmic-facing. The disordered stretch occupies residues Pro-364–Leu-390. The segment covering Gln-375–Leu-390 has biased composition (basic and acidic residues). A Phosphothreonine modification is found at Thr-391. Phosphoserine is present on Ser-394.

As to quaternary structure, homodimer; disulfide-linked. Interacts with P- and E-selectins, through their lectin/EGF domains. Interaction with P-selectin requires sialyl Lewis X glycan modification and tyrosine sulfation, probably on Tyr-54, for high affinity binding. Dimerization appears not to be required for P-selectin/SELP binding. Interacts with SNX20. Interacts with MSN and SYK; mediates SYK activation downstream of SELPLG. Interacts with HAVCR1. Displays complex, core-2, sialylated and fucosylated O-linked oligosaccharides, at least some of which appear to contain poly-N-acetyllactosamine with varying degrees of substitution. Mainly disialylated or neutral forms of the core-2 tetrasaccharide, Galbeta1--&gt;4GlcNAcbeta1--&gt;6(Galbeta1--&gt;3)GalNAcOH. The GlcN:GalN ratio is approximately 2:1 and the Man:Fuc ratio 3:5. Contains about 14% fucose with alpha-1,3 linkage present in two forms: One species is a disialylated, monofucosylated glycan, and the other, a monosialylated, trifucosylated glycan with a polylactosamine backbone. The fucosylated forms carry the Lewis antigen and are important for interaction with selectins and for functioning. No sulfated O-glycans. Some N-glycosylation. In terms of tissue distribution, highly expressed in blood, bone marrow, brain, adipose tissue, spleen, and thymus. Also expressed in heart, kidney, liver, muscle, ovary, and stomach.

The protein resides in the cell membrane. Its function is as follows. An SLe(x)-type proteoglycan, which through high affinity, calcium-dependent interactions with E- and P-selectins, mediates rapid rolling of leukocytes over vascular surfaces during the initial steps in inflammation. Critical for the initial leukocyte capture. This Mus musculus (Mouse) protein is P-selectin glycoprotein ligand 1 (Selplg).